Here is a 92-residue protein sequence, read N- to C-terminus: Serine rich endogenous peptide 11 (92 aa).

An N-terminal signal peptide occupies residues 1 to 29; it reads MENNTFSSKSINLLILLLLLCTFLCQTES. The segment at 50 to 92 is disordered; it reads PNTDIGTPSSTSDRGGGGNGRRLMSQMDVGASSSGQGGGRNRH. The span at 53–62 shows a compositional bias: polar residues; sequence DIGTPSSTSD. 2 short sequence motifs (SCOOP motif) span residues 53–67 and 75–89; these read DIGTPSSTSDRGGGG and QMDVGASSSGQGGGR. Short sequence motifs (sxS motif essential for MIK2 binding) lie at residues 59 to 61 and 81 to 83; these read STS and SSS.

It belongs to the serine rich endogenous peptide (SCOOP) phytocytokine family. As to quaternary structure, interacts with MIK2 (via extracellular leucine-rich repeat domain); this interaction triggers the formation of complex between MIK2 and the BAK1/SERK3 and SERK4 coreceptors, and subsequent BAK1 activation by phosphorylation. As to expression, mostly expressed in seedlings shoots and roots, and, to a lower extent, in leaves.

The protein localises to the cell membrane. It is found in the secreted. The protein resides in the extracellular space. Its subcellular location is the apoplast. Brassicaceae-specific phytocytokine (plant endogenous peptide released into the apoplast) perceived by MIK2 in a BAK1/SERK3 and SERK4 coreceptors-dependent manner, that modulates various physiological and antimicrobial processes including growth prevention and reactive oxygen species (ROS) response regulation. In Arabidopsis thaliana (Mouse-ear cress), this protein is Serine rich endogenous peptide 11.